We begin with the raw amino-acid sequence, 126 residues long: MGKEQNPRRVAENEAFAKTKMLRTSPQKLNLVAAMIRGKKVDKALADLTFSSKRIAGDVKKCLQSAIANAENNHNLDVDNLIVAEAWVGKNLVMKRGRPRARGRYGKIMKPFSEITIKVRQVEERA.

It belongs to the universal ribosomal protein uL22 family. As to quaternary structure, part of the 50S ribosomal subunit.

Its function is as follows. This protein binds specifically to 23S rRNA; its binding is stimulated by other ribosomal proteins, e.g. L4, L17, and L20. It is important during the early stages of 50S assembly. It makes multiple contacts with different domains of the 23S rRNA in the assembled 50S subunit and ribosome. In terms of biological role, the globular domain of the protein is located near the polypeptide exit tunnel on the outside of the subunit, while an extended beta-hairpin is found that lines the wall of the exit tunnel in the center of the 70S ribosome. The chain is Large ribosomal subunit protein uL22 from Paracoccus denitrificans (strain Pd 1222).